Reading from the N-terminus, the 206-residue chain is Cytidylate kinase (206 aa).

7 to 15 (GPAASGKGT) lines the ATP pocket.

This sequence belongs to the cytidylate kinase family. Type 1 subfamily.

It localises to the cytoplasm. The enzyme catalyses CMP + ATP = CDP + ADP. The catalysed reaction is dCMP + ATP = dCDP + ADP. This chain is Cytidylate kinase, found in Azorhizobium caulinodans (strain ATCC 43989 / DSM 5975 / JCM 20966 / LMG 6465 / NBRC 14845 / NCIMB 13405 / ORS 571).